The following is a 260-amino-acid chain: Serine hydroxymethyltransferase (260 aa).

Lys-60 carries the N6-(pyridoxal phosphate)lysine modification.

It belongs to the SHMT family. In terms of assembly, homodimer. Pyridoxal 5'-phosphate serves as cofactor.

The protein localises to the cytoplasm. It carries out the reaction (6R)-5,10-methylene-5,6,7,8-tetrahydrofolate + glycine + H2O = (6S)-5,6,7,8-tetrahydrofolate + L-serine. Its pathway is one-carbon metabolism; tetrahydrofolate interconversion. It participates in amino-acid biosynthesis; glycine biosynthesis; glycine from L-serine: step 1/1. In terms of biological role, catalyzes the reversible interconversion of serine and glycine with tetrahydrofolate (THF) serving as the one-carbon carrier. This reaction serves as the major source of one-carbon groups required for the biosynthesis of purines, thymidylate, methionine, and other important biomolecules. Also exhibits THF-independent aldolase activity toward beta-hydroxyamino acids, producing glycine and aldehydes, via a retro-aldol mechanism. This is Serine hydroxymethyltransferase from Corynebacterium sp. (strain P-1).